The sequence spans 441 residues: Glutamate--tRNA ligase 2 (441 aa).

Positions 9 to 19 match the 'HIGH' region motif; it reads PSPTGYIHVGN. A 'KMSKS' region motif is present at residues 239 to 243; that stretch reads ALSKR. Lys242 is a binding site for ATP.

Belongs to the class-I aminoacyl-tRNA synthetase family. Glutamate--tRNA ligase type 1 subfamily. As to quaternary structure, monomer.

Its subcellular location is the cytoplasm. The catalysed reaction is tRNA(Glu) + L-glutamate + ATP = L-glutamyl-tRNA(Glu) + AMP + diphosphate. Functionally, catalyzes the attachment of glutamate to tRNA(Glu) in a two-step reaction: glutamate is first activated by ATP to form Glu-AMP and then transferred to the acceptor end of tRNA(Glu). In Cereibacter sphaeroides (strain ATCC 17029 / ATH 2.4.9) (Rhodobacter sphaeroides), this protein is Glutamate--tRNA ligase 2.